We begin with the raw amino-acid sequence, 62 residues long: Photosystem II reaction center protein Z (62 aa).

The next 2 helical transmembrane spans lie at A8 to A28 and F41 to V61.

It belongs to the PsbZ family. As to quaternary structure, PSII is composed of 1 copy each of membrane proteins PsbA, PsbB, PsbC, PsbD, PsbE, PsbF, PsbH, PsbI, PsbJ, PsbK, PsbL, PsbM, PsbT, PsbX, PsbY, PsbZ, Psb30/Ycf12, peripheral proteins PsbO, CyanoQ (PsbQ), PsbU, PsbV and a large number of cofactors. It forms dimeric complexes.

The protein resides in the cellular thylakoid membrane. In terms of biological role, may control the interaction of photosystem II (PSII) cores with the light-harvesting antenna, regulates electron flow through the 2 photosystem reaction centers. PSII is a light-driven water plastoquinone oxidoreductase, using light energy to abstract electrons from H(2)O, generating a proton gradient subsequently used for ATP formation. The polypeptide is Photosystem II reaction center protein Z (Picosynechococcus sp. (strain ATCC 27264 / PCC 7002 / PR-6) (Agmenellum quadruplicatum)).